The sequence spans 527 residues: Laccase-5 (527 aa).

An N-terminal signal peptide occupies residues methionine 1–glycine 23. Residues isoleucine 25–tyrosine 150 enclose the Plastocyanin-like 1 domain. Residues asparagine 74 and asparagine 77 are each glycosylated (N-linked (GlcNAc...) asparagine). Residues histidine 87, histidine 89, histidine 132, and histidine 134 each coordinate Cu cation. Disulfide bonds link cysteine 108/cysteine 516 and cysteine 140/cysteine 230. 10 N-linked (GlcNAc...) asparagine glycosylation sites follow: asparagine 156, asparagine 209, asparagine 233, asparagine 242, asparagine 276, asparagine 317, asparagine 358, asparagine 366, asparagine 393, and asparagine 402. The 145-residue stretch at valine 162 to tyrosine 306 folds into the Plastocyanin-like 2 domain. A Plastocyanin-like 3 domain is found at threonine 373–aspartate 498. Cu cation contacts are provided by histidine 425, histidine 428, histidine 430, histidine 480, cysteine 481, histidine 482, and histidine 486.

It belongs to the multicopper oxidase family. Homodimer. It depends on Cu cation as a cofactor.

The protein localises to the secreted. It carries out the reaction 4 hydroquinone + O2 = 4 benzosemiquinone + 2 H2O. Its function is as follows. Lignin degradation and detoxification of lignin-derived products. This chain is Laccase-5 (LCC5), found in Trametes villosa (White-rot fungus).